The following is a 128-amino-acid chain: 14.7 kDa protein (128 aa).

The segment at 65 to 94 (CFDCGAYLYDDHVCKRFTSRSNSDCLSVIH) adopts a C4-type zinc-finger fold.

Its function is as follows. May act as a regulatory factor during viral transcription. The chain is 14.7 kDa protein from Shallot virus X (ShVX).